Reading from the N-terminus, the 357-residue chain is GTPase Obg (357 aa).

Residues 1–159 (MKFVDEAEIQ…RTLKLELKLL (159 aa)) enclose the Obg domain. An OBG-type G domain is found at 160–343 (ADIGMLGFPN…IMKSAMTLFE (184 aa)). Residues 166-173 (GFPNVGKS), 191-195 (FTTLY), 213-216 (DVPG), 293-296 (NKAD), and 324-326 (SAV) contribute to the GTP site. Positions 173 and 193 each coordinate Mg(2+).

This sequence belongs to the TRAFAC class OBG-HflX-like GTPase superfamily. OBG GTPase family. In terms of assembly, monomer. The cofactor is Mg(2+).

It is found in the cytoplasm. Its function is as follows. An essential GTPase which binds GTP, GDP and possibly (p)ppGpp with moderate affinity, with high nucleotide exchange rates and a fairly low GTP hydrolysis rate. Plays a role in control of the cell cycle, stress response, ribosome biogenesis and in those bacteria that undergo differentiation, in morphogenesis control. This is GTPase Obg from Xylella fastidiosa (strain 9a5c).